The primary structure comprises 307 residues: Glutaminase (307 aa).

Ser-67, Asn-117, Glu-161, Asn-168, Tyr-192, Tyr-243, and Val-261 together coordinate substrate.

This sequence belongs to the glutaminase family. Homotetramer.

It carries out the reaction L-glutamine + H2O = L-glutamate + NH4(+). The protein is Glutaminase of Streptomyces coelicolor (strain ATCC BAA-471 / A3(2) / M145).